A 601-amino-acid chain; its full sequence is Somatic embryogenesis receptor kinase 5 (601 aa).

An N-terminal signal peptide occupies residues 1-24 (MEHGSSRGFIWLILFLDFVSRVTG). The Extracellular portion of the chain corresponds to 25–215 (KTQVDALIAL…SPSPSPSGTS (191 aa)). N-linked (GlcNAc...) asparagine glycans are attached at residues Asn-52, Asn-81, Asn-105, Asn-129, Asn-151, and Asn-184. LRR repeat units follow at residues 71–94 (SVTRLDLGSANLSGELVPQLAQLP), 95–118 (NLQYLELFNNNITGEIPEELGDLM), 119–141 (ELVSLDLFANNISGPIPSSLGKL), 143–165 (KLRFLRLYNNSLSGEIPRSLTAL), and 166–188 (PLDVLDISNNRLSGDIPVNGSFS). Residues 216 to 236 (AAIVVGVAAGAALLFALAWWL) traverse the membrane as a helical segment. Residues 237–601 (RRKLQGHFLD…IENDYPSGPR (365 aa)) are Cytoplasmic-facing. Residue Thr-272 is modified to Phosphothreonine. The 298-residue stretch at 275–572 (FSKRNVLGKG…KEEMPIHDFN (298 aa)) folds into the Protein kinase domain. 281–289 (LGKGRFGIL) provides a ligand contact to ATP. Thr-298 bears the Phosphothreonine mark. Lys-303 contacts ATP. Phosphoserine occurs at positions 356 and 359. The active-site Proton acceptor is the Asp-402. A phosphothreonine mark is found at Thr-435, Thr-436, and Thr-441. Phosphotyrosine is present on Tyr-449. Ser-451 bears the Phosphoserine mark. Thr-452 bears the Phosphothreonine mark. Ser-456 and Ser-506 each carry phosphoserine. Thr-532 is subject to Phosphothreonine.

The protein belongs to the protein kinase superfamily. Ser/Thr protein kinase family. In terms of assembly, interacts with TMK4/BARK1. Post-translationally, autophosphorylated.

The protein resides in the cell membrane. The enzyme catalyses L-seryl-[protein] + ATP = O-phospho-L-seryl-[protein] + ADP + H(+). It carries out the reaction L-threonyl-[protein] + ATP = O-phospho-L-threonyl-[protein] + ADP + H(+). Its function is as follows. Serine/threonine-kinase of unknown function. This Arabidopsis thaliana (Mouse-ear cress) protein is Somatic embryogenesis receptor kinase 5 (SERK5).